A 211-amino-acid chain; its full sequence is Large ribosomal subunit protein uL4 (211 aa).

Residues 46–55 (GNHATKTRSM) are compositionally biased toward polar residues. A disordered region spans residues 46 to 89 (GNHATKTRSMVSGGGKKPWSQKGTGRARQGSTRAPHWVGGGTVH).

The protein belongs to the universal ribosomal protein uL4 family. Part of the 50S ribosomal subunit.

Functionally, one of the primary rRNA binding proteins, this protein initially binds near the 5'-end of the 23S rRNA. It is important during the early stages of 50S assembly. It makes multiple contacts with different domains of the 23S rRNA in the assembled 50S subunit and ribosome. In terms of biological role, forms part of the polypeptide exit tunnel. This Leptospira interrogans serogroup Icterohaemorrhagiae serovar copenhageni (strain Fiocruz L1-130) protein is Large ribosomal subunit protein uL4.